Consider the following 361-residue polypeptide: Ribosomal RNA large subunit methyltransferase M (361 aa).

S-adenosyl-L-methionine contacts are provided by residues S190, C223–G226, D242, D262, and D280. K309 (proton acceptor) is an active-site residue.

This sequence belongs to the class I-like SAM-binding methyltransferase superfamily. RNA methyltransferase RlmE family. RlmM subfamily. Monomer.

Its subcellular location is the cytoplasm. The enzyme catalyses cytidine(2498) in 23S rRNA + S-adenosyl-L-methionine = 2'-O-methylcytidine(2498) in 23S rRNA + S-adenosyl-L-homocysteine + H(+). Its function is as follows. Catalyzes the 2'-O-methylation at nucleotide C2498 in 23S rRNA. The chain is Ribosomal RNA large subunit methyltransferase M from Actinobacillus pleuropneumoniae serotype 7 (strain AP76).